The following is an 88-amino-acid chain: UPF0297 protein Cphy_2298 (88 aa).

This sequence belongs to the UPF0297 family.

This is UPF0297 protein Cphy_2298 from Lachnoclostridium phytofermentans (strain ATCC 700394 / DSM 18823 / ISDg) (Clostridium phytofermentans).